A 360-amino-acid polypeptide reads, in one-letter code: MTATLERNASVSLWEQFCGFITSTENRLYIGWFGVLMFPLLLTATTLFIIAFVAAPPVDIDGIREPVAGSLFYGNNIISGAVIPSSAAIGMHFYPIWEAASLDEWLYNGGPYQFVVMHFLLGVACYMGREWELSFRLGMRPWIAVAYSAPVAAATAVFLIYPIGQGSFSDGMPLGISGTFNFMLVFQAEHNILMHPFHMMGVAGVFGGSLFSAMHGSLVTSSLIRETTENESANAGYKFGQEEETYNIVAAHGYFGRLIFQYASFNNSRSLHFFLALWPVVGIWFTALGLSTMAFNLNGLNFNQSVVDSQGRVISTWADIINRANLGMEVMHERNAHNFPLDLASGEVMPVALTAPSINA.

Transmembrane regions (helical) follow at residues 29-46 (YIGW…TATT), 118-133 (HFLL…EWEL), and 142-156 (WIAV…AATA). His-118 lines the chlorophyll a pocket. Tyr-126 provides a ligand contact to pheophytin a. [CaMn4O5] cluster-binding residues include Asp-170 and Glu-189. The helical transmembrane segment at 197–218 (FHMMGVAGVFGGSLFSAMHGSL) threads the bilayer. His-198 contributes to the chlorophyll a binding site. A quinone contacts are provided by residues His-215 and 264-265 (SF). His-215 contacts Fe cation. His-272 is a binding site for Fe cation. A helical transmembrane segment spans residues 274–288 (FLALWPVVGIWFTAL). Positions 332, 333, 342, and 344 each coordinate [CaMn4O5] cluster. Residues 345-360 (SGEVMPVALTAPSINA) constitute a propeptide that is removed on maturation.

This sequence belongs to the reaction center PufL/M/PsbA/D family. As to quaternary structure, PSII is composed of 1 copy each of membrane proteins PsbA, PsbB, PsbC, PsbD, PsbE, PsbF, PsbH, PsbI, PsbJ, PsbK, PsbL, PsbM, PsbT, PsbX, PsbY, PsbZ, Psb30/Ycf12, at least 3 peripheral proteins of the oxygen-evolving complex and a large number of cofactors. It forms dimeric complexes. Requires The D1/D2 heterodimer binds P680, chlorophylls that are the primary electron donor of PSII, and subsequent electron acceptors. It shares a non-heme iron and each subunit binds pheophytin, quinone, additional chlorophylls, carotenoids and lipids. D1 provides most of the ligands for the Mn4-Ca-O5 cluster of the oxygen-evolving complex (OEC). There is also a Cl(-1) ion associated with D1 and D2, which is required for oxygen evolution. The PSII complex binds additional chlorophylls, carotenoids and specific lipids. as cofactor. In terms of processing, tyr-161 forms a radical intermediate that is referred to as redox-active TyrZ, YZ or Y-Z. Post-translationally, C-terminally processed by CTPA; processing is essential to allow assembly of the oxygen-evolving complex and thus photosynthetic growth.

It is found in the plastid. It localises to the cyanelle thylakoid membrane. It carries out the reaction 2 a plastoquinone + 4 hnu + 2 H2O = 2 a plastoquinol + O2. Functionally, photosystem II (PSII) is a light-driven water:plastoquinone oxidoreductase that uses light energy to abstract electrons from H(2)O, generating O(2) and a proton gradient subsequently used for ATP formation. It consists of a core antenna complex that captures photons, and an electron transfer chain that converts photonic excitation into a charge separation. The D1/D2 (PsbA/PsbD) reaction center heterodimer binds P680, the primary electron donor of PSII as well as several subsequent electron acceptors. The sequence is that of Photosystem II protein D1 from Cyanophora paradoxa.